A 787-amino-acid polypeptide reads, in one-letter code: Endonuclease MutS2 (787 aa).

334–341 contacts ATP; it reads GPNTGGKT. Residues 685–709 are disordered; sequence KAQDPAKSAKQPRASVKRSGSSGMS. The 76-residue stretch at 712 to 787 folds into the Smr domain; that stretch reads LDLRGHRYEE…GDGSTVVHFK (76 aa).

Belongs to the DNA mismatch repair MutS family. MutS2 subfamily. In terms of assembly, homodimer. Binds to stalled ribosomes, contacting rRNA.

Endonuclease that is involved in the suppression of homologous recombination and thus may have a key role in the control of bacterial genetic diversity. Its function is as follows. Acts as a ribosome collision sensor, splitting the ribosome into its 2 subunits. Detects stalled/collided 70S ribosomes which it binds and splits by an ATP-hydrolysis driven conformational change. Acts upstream of the ribosome quality control system (RQC), a ribosome-associated complex that mediates the extraction of incompletely synthesized nascent chains from stalled ribosomes and their subsequent degradation. Probably generates substrates for RQC. The chain is Endonuclease MutS2 from Levilactobacillus brevis (strain ATCC 367 / BCRC 12310 / CIP 105137 / JCM 1170 / LMG 11437 / NCIMB 947 / NCTC 947) (Lactobacillus brevis).